Reading from the N-terminus, the 198-residue chain is Peptide deformylase (198 aa).

Residues Cys-123 and His-167 each contribute to the Fe cation site. Glu-168 is a catalytic residue. Position 171 (His-171) interacts with Fe cation.

This sequence belongs to the polypeptide deformylase family. Requires Fe(2+) as cofactor.

It catalyses the reaction N-terminal N-formyl-L-methionyl-[peptide] + H2O = N-terminal L-methionyl-[peptide] + formate. Removes the formyl group from the N-terminal Met of newly synthesized proteins. Requires at least a dipeptide for an efficient rate of reaction. N-terminal L-methionine is a prerequisite for activity but the enzyme has broad specificity at other positions. This is Peptide deformylase from Ureaplasma parvum serovar 3 (strain ATCC 27815 / 27 / NCTC 11736).